The chain runs to 156 residues: ATP synthase subunit b (156 aa).

The chain crosses the membrane as a helical span at residues 7 to 27; sequence LFAQMIVFFVLWWVVARFVWP.

The protein belongs to the ATPase B chain family. In terms of assembly, F-type ATPases have 2 components, F(1) - the catalytic core - and F(0) - the membrane proton channel. F(1) has five subunits: alpha(3), beta(3), gamma(1), delta(1), epsilon(1). F(0) has three main subunits: a(1), b(2) and c(10-14). The alpha and beta chains form an alternating ring which encloses part of the gamma chain. F(1) is attached to F(0) by a central stalk formed by the gamma and epsilon chains, while a peripheral stalk is formed by the delta and b chains.

The protein localises to the cell membrane. In terms of biological role, f(1)F(0) ATP synthase produces ATP from ADP in the presence of a proton or sodium gradient. F-type ATPases consist of two structural domains, F(1) containing the extramembraneous catalytic core and F(0) containing the membrane proton channel, linked together by a central stalk and a peripheral stalk. During catalysis, ATP synthesis in the catalytic domain of F(1) is coupled via a rotary mechanism of the central stalk subunits to proton translocation. Its function is as follows. Component of the F(0) channel, it forms part of the peripheral stalk, linking F(1) to F(0). This chain is ATP synthase subunit b, found in Polynucleobacter asymbioticus (strain DSM 18221 / CIP 109841 / QLW-P1DMWA-1) (Polynucleobacter necessarius subsp. asymbioticus).